The sequence spans 373 residues: Alanine racemase (373 aa).

The active-site Proton acceptor; specific for D-alanine is Lys35. Lys35 carries the N6-(pyridoxal phosphate)lysine modification. Arg130 contributes to the substrate binding site. Tyr253 acts as the Proton acceptor; specific for L-alanine in catalysis. A substrate-binding site is contributed by Met305.

Belongs to the alanine racemase family. It depends on pyridoxal 5'-phosphate as a cofactor.

The enzyme catalyses L-alanine = D-alanine. The protein operates within amino-acid biosynthesis; D-alanine biosynthesis; D-alanine from L-alanine: step 1/1. Its function is as follows. Catalyzes the interconversion of L-alanine and D-alanine. May also act on other amino acids. This is Alanine racemase (alr) from Cupriavidus necator (strain ATCC 17699 / DSM 428 / KCTC 22496 / NCIMB 10442 / H16 / Stanier 337) (Ralstonia eutropha).